A 107-amino-acid polypeptide reads, in one-letter code: Stellacyanin (107 aa).

Residues 1–105 (TVYTVGDSAG…GQKVHINVTV (105 aa)) enclose the Phytocyanin domain. Asn28 carries an N-linked (GlcNAc...) asparagine glycan. Cu cation is bound at residue His46. The cysteines at positions 59 and 93 are disulfide-linked. The N-linked (GlcNAc...) asparagine glycan is linked to Asn60. The Cu cation site is built by Cys87, His92, and Gln97. Residue Asn102 is glycosylated (N-linked (GlcNAc...) asparagine).

This is Stellacyanin from Toxicodendron vernicifluum (Japanese lacquer tree).